The chain runs to 171 residues: uncharacterized protein (171 aa).

This is an uncharacterized protein from Saccharomyces cerevisiae (strain ATCC 204508 / S288c) (Baker's yeast).